A 421-amino-acid polypeptide reads, in one-letter code: Inner membrane transport protein YdiN (421 aa).

Residues 1-9 (MSQNKAFST) lie on the Cytoplasmic side of the membrane. A helical transmembrane segment spans residues 10–30 (PFILAVLCIYFSYFLHGISVI). Residues 31–49 (TLAQNMSSLAEKFSTDNAG) are Periplasmic-facing. The chain crosses the membrane as a helical span at residues 50 to 70 (IAYLISGIGLGRLISILFFGV). Residues 71–78 (ISDKFGRR) lie on the Cytoplasmic side of the membrane. A helical transmembrane segment spans residues 79-99 (AVILMAVIMYLLFFFGIPACP). Residue Asn-100 is a topological domain, periplasmic. Residues 101–121 (LTLAYGLAVCVGIANSALDTG) form a helical membrane-spanning segment. The Cytoplasmic portion of the chain corresponds to 122-136 (GYPALMECFPKASGS). A helical membrane pass occupies residues 137-157 (AVILVKAMVSFGQMFYPMLVS). Topologically, residues 158–163 (YMLLNN) are periplasmic. The helical transmembrane segment at 164–184 (IWYGYGLIIPGILFVLITLML) threads the bilayer. Over 185–215 (LKSKFPSQLVDASVTNELPQMNSKPLVWLEG) the chain is Cytoplasmic. Residues 216–236 (VSSVLFGVAAFSTFYVIVVWM) form a helical membrane-spanning segment. Residues 237-251 (PKYAMAFAGMSEAEA) are Periplasmic-facing. A helical membrane pass occupies residues 252 to 272 (LKTISYYSMGSLVCVFIFAAL). The Cytoplasmic segment spans residues 273-279 (LKKMVRP). A helical membrane pass occupies residues 280–300 (IWANVFNSALATITAAIIYLY). Topologically, residues 301-308 (PSPLVCNA) are periplasmic. A helical transmembrane segment spans residues 309–329 (GAFVIGFSAAGGILQLGVSVM). Residues 330–342 (SEFFPKSKAKVTS) are Cytoplasmic-facing. A helical transmembrane segment spans residues 343–363 (IYMMMGGLANFVIPLITGYLS). The Periplasmic segment spans residues 364 to 369 (NIGLQY). The chain crosses the membrane as a helical span at residues 370-390 (IIVLDFTFALLALITAIIVFI). At 391–421 (RYYRVFIIPENDVRFGERKFCTRLNTIKHRG) the chain is on the cytoplasmic side.

This sequence belongs to the major facilitator superfamily.

The protein resides in the cell inner membrane. In Escherichia coli (strain K12), this protein is Inner membrane transport protein YdiN (ydiN).